The sequence spans 446 residues: Eukaryotic translation initiation factor 2 subunit gamma (446 aa).

One can recognise a tr-type G domain in the interval 21 to 227 (QATINIGTIG…YIVKKIPIPV (207 aa)). The interval 30-37 (GHVAHGKS) is G1. Residue 33 to 38 (AHGKST) participates in GTP binding. Residues 58–62 (NITIK) are G2. Positions 114–117 (DCPG) are G3. GTP contacts are provided by residues 170-173 (NKVD) and 205-207 (SAQ). The G4 stretch occupies residues 170 to 173 (NKVD). The tract at residues 205–207 (SAQ) is G5. The interacts with cdc123 stretch occupies residues 436-446 (AKVVEGKTLKV).

The protein belongs to the TRAFAC class translation factor GTPase superfamily. Classic translation factor GTPase family. EIF2G subfamily. In terms of assembly, eukaryotic translation initiation factor 2 eIF2 is a heterotrimeric complex composed of an alpha, a beta and a gamma subunit. The factors eIF-1, eIF-2, eIF-3, TIF5/eIF-5 and methionyl-tRNAi form a multifactor complex (MFC) that may bind to the 40S ribosome. Interacts with cdc123; the interaction is direct.

Its subcellular location is the cytoplasm. The protein resides in the cytosol. It catalyses the reaction GTP + H2O = GDP + phosphate + H(+). Functionally, as a subunit of eukaryotic initiation factor 2 eIF2, involved in the early steps of protein synthesis. In the presence of GTP, eIF-2 forms a ternary complex with initiator tRNA Met-tRNAi and then recruits the 40S ribosomal complex and initiation factors eIF-1, eIF-1A and eIF-3 to form the 43S pre-initiation complex (43S PIC), a step that determines the rate of protein translation. The 43S PIC binds to mRNA and scans downstream to the initiation codon, where it forms a 48S initiation complex by codon-anticodon base pairing. This leads to the displacement of eIF-1 to allow GTPase-activating protein (GAP) eIF-5-mediated hydrolysis of eIF2-bound GTP. Hydrolysis of GTP and release of Pi, which makes GTP hydrolysis irreversible, causes the release of the eIF-2-GDP binary complex from the 40S subunit, an event that is essential for the subsequent joining of the 60S ribosomal subunit to form an elongation-competent 80S ribosome. In order for eIF-2 to recycle and catalyze another round of initiation, the GDP bound to eIF-2 must be exchanged with GTP by way of a reaction catalyzed by GDP-GTP exchange factor (GEF) eIF-2B. The polypeptide is Eukaryotic translation initiation factor 2 subunit gamma (tif213) (Schizosaccharomyces pombe (strain 972 / ATCC 24843) (Fission yeast)).